The chain runs to 234 residues: Peroxisomal coenzyme A diphosphatase ndx-8 (234 aa).

The region spanning 27–162 (EQDAGVLILL…TFLIDEFYMV (136 aa)) is the Nudix hydrolase domain. Residues 66 to 90 (GGMMDDEDGQNVRRTAIREAYEEVG) carry the Nudix box motif. Mg(2+) contacts are provided by Glu-84 and Glu-88. Residues 170–190 (YPTTYGVTALMCIVVAIGLLG) traverse the membrane as a helical segment. The Microbody targeting signal signature appears at 232-234 (SKI).

This sequence belongs to the Nudix hydrolase family. Mg(2+) serves as cofactor. Mn(2+) is required as a cofactor.

Its subcellular location is the peroxisome membrane. In terms of biological role, coenzyme A diphosphatase which mediates the cleavage of CoA into 3',5'-ADP and 4'-phosphopantetheine. This is Peroxisomal coenzyme A diphosphatase ndx-8 (ndx-8) from Caenorhabditis elegans.